Reading from the N-terminus, the 339-residue chain is Probable E3 ubiquitin-protein ligase BAH1-like 1 (339 aa).

One can recognise an SPX domain in the interval Met1–Ser163. The segment at Cys235–Arg284 adopts an RING-type zinc-finger fold.

Belongs to the RING-type zinc finger family.

It catalyses the reaction S-ubiquitinyl-[E2 ubiquitin-conjugating enzyme]-L-cysteine + [acceptor protein]-L-lysine = [E2 ubiquitin-conjugating enzyme]-L-cysteine + N(6)-ubiquitinyl-[acceptor protein]-L-lysine.. It functions in the pathway protein modification; protein ubiquitination. In Oryza sativa subsp. indica (Rice), this protein is Probable E3 ubiquitin-protein ligase BAH1-like 1.